Here is a 2278-residue protein sequence, read N- to C-terminus: Protein Ycf2 (2278 aa).

Gly-1632 to Ser-1639 provides a ligand contact to ATP.

This sequence belongs to the Ycf2 family.

It localises to the plastid. The protein resides in the chloroplast stroma. In terms of biological role, probable ATPase of unknown function. Its presence in a non-photosynthetic plant (Epifagus virginiana) and experiments in tobacco indicate that it has an essential function which is probably not related to photosynthesis. The polypeptide is Protein Ycf2 (Solanum bulbocastanum (Wild potato)).